Here is a 351-residue protein sequence, read N- to C-terminus: MTLPAPRDGSPAVPRLADIAAQAQVSEATASRVLNGRPASRXSTRQRVLAALDLLGYERPTRLRRRSAGLIGLVTPELTNPIFPAFAQVVEQALAGYGYTPVLCTQIPGGATEDELVEQLEERGVNGIVFLSGLHADTTADPRRYARLTERGVPFVLINGYNERIRAPFVSPDDRSAVRMAVRHLADLGHRRIGLAVGPDRYVPSRRKAEGFADALAEILGTPRDQAEQHVRRTLFSVEGGHAAAGSLLEQGCTGLVCGSDLMALGAVRAARERGLDVPADLSVVGFDDSQLVAFTDPPLTTVRQPVHAMATAAVGALLEEIAHQTVQRTEFVFQPELVVRGSTAQWVPGG.

One can recognise an HTH lacI-type domain in the interval 14–69 (PRLADIAAQAQVSEATASRVLNGRPASRXSTRQRVLAALDLLGYERPTRLRRRSAG). The H-T-H motif DNA-binding region spans 16–35 (LADIAAQAQVSEATASRVLN).

Putative sugar-binding regulatory protein for the alpha-amylase gene. This is an uncharacterized protein from Streptomyces limosus (Streptomyces albidoflavus).